The sequence spans 290 residues: uncharacterized protein (290 aa).

NAD(+)-binding positions include 7-21 and Thr-100; that span reads AVFGLGVMGSPMAQN. Lys-175 is a catalytic residue. Position 243 (Lys-243) interacts with NAD(+).

This sequence belongs to the HIBADH-related family.

This is an uncharacterized protein from Synechocystis sp. (strain ATCC 27184 / PCC 6803 / Kazusa).